The following is a 490-amino-acid chain: Allantoin permease (490 aa).

The next 12 membrane-spanning stretches (helical) occupy residues 36 to 56 (IWMG…LIAI), 60 to 80 (PWQV…ALAL), 116 to 136 (AIMW…ILLL), 151 to 171 (ILGI…IHLL), 190 to 210 (LVYL…GGLG), 225 to 245 (TFWP…TLIL), 265 to 285 (FYGL…VTSG), 308 to 328 (YVIV…NVAA), 350 to 370 (GSFI…MESA), 373 to 393 (VYAF…VMMA), 425 to 445 (AFAA…VPVL), and 448 to 468 (LYDI…IVLM).

Belongs to the purine-cytosine permease (2.A.39) family.

Its subcellular location is the cell membrane. The catalysed reaction is (S)-allantoin(in) + H(+)(in) = (S)-allantoin(out) + H(+)(out). In terms of biological role, uptake of allantoin into the cell. Allantoin uptake is not dependent on sodium, and PucI is likely to be a proton-coupled symporter. Shows highest recognition for binding of allantoin, good recognition for binding of hydantoin, L-5-benzylhydantoin and 5-hydroxyhydantoin, and to a lesser extent for a range of nucleobases and nucleosides. The polypeptide is Allantoin permease (Bacillus subtilis (strain 168)).